We begin with the raw amino-acid sequence, 997 residues long: Synaptonemal complex protein 1 (997 aa).

Positions 102–112 (PMSRLYSKLYK) match the Mediates head to head self-assembly of N-terminal ends motif. The Nuclear localization signal signature appears at 118 to 121 (KKWK). Coiled coils occupy residues 121–176 (KVSI…LIKE) and 212–696 (YVDL…KKIS). Residues 207-363 (ETRQVYVDLN…YQLTEEKEAQ (157 aa)) form an interaction with SYCE3 region. Positions 698–792 (EKLLGEVEKA…VSLKKQLEVE (95 aa)) are required for pH-induced assembly of C-terminal ends into antiparallel tetramers. The short motif at 701-704 (LGEV) is the Nuclear localization signal element. A coiled-coil region spans residues 768–806 (KVALETELSNIRNELVSLKKQLEVEKEEKEKLKMEQENT). Residues 805 to 997 (NTAILTDKKD…RLKEAEKLFT (193 aa)) form a DNA-binding region. Position 824 is a phosphoserine (S824). Positions 828–863 (TSWKFDSKTTPSQNISRLSSSMDSGKSKDNRDSLRA) are disordered. The span at 835 to 851 (KTTPSQNISRLSSSMDS) shows a compositional bias: polar residues. Residues 852 to 861 (GKSKDNRDSL) show a composition bias toward basic and acidic residues. Residues 902-905 (KKRK) carry the Nuclear localization signal motif. Position 940 is a phosphothreonine (T940).

In terms of assembly, structural component of synaptonemal complexes. Homotetramer that consists of an N-terminal four-helical bundle that bifurcates into two elongated C-terminal dimeric coiled coils. This tetrameric building block potentially self-assembles into a supramolecular zipper-like lattice to mediate meiotic chromosome synapsis. Self-assembly is likely initiated by local proton density at chromosome axis, which is predicted to trigger antiparallel back to back assembly of adjacent C-terminal ends into tetrameric structures that anchor to chromosomal DNA. Then the N-terminal ends are predicted to undergo cooperative antiparallel head to head assembly at the midline of synaptonemal complexes central element to form a zipper-like lattice between properly aligned homologous chromosomes. The nascent synapsis generated by SYCP1 is stabilized through interaction with central element proteins SYCE1 and SYCE2. Interacts (via tetrameric core) with SYCE3; the interaction remodels SYCP1 homotetramers to 2:1 heterotrimers with SYCE3. SYCP1/SYCE3 heterotrimers form lattice assemblies as part of the mature synaptonemal complex via both lateral and head-to-head interactions. Forms a complex with EWSR1, PRDM9, SYCP3 and REC8; complex formation is dependent of phosphorylated form of REC8 and requires PRDM9 bound to hotspot DNA; EWSR1 joins PRDM9 with the chromosomal axis through REC8. Interacts with SPO16. Testis.

The protein localises to the nucleus. It localises to the chromosome. Its subcellular location is the centromere. In terms of biological role, major component of the transverse filaments of synaptonemal complexes, formed between homologous chromosomes during meiotic prophase. Required for normal assembly of the central element of the synaptonemal complexes. Required for normal centromere pairing during meiosis. Required for normal meiotic chromosome synapsis during oocyte and spermatocyte development and for normal male and female fertility. This is Synaptonemal complex protein 1 from Rattus norvegicus (Rat).